The primary structure comprises 120 residues: Small ribosomal subunit protein bS16 (120 aa).

The segment covering 84-110 (KREVKSNPEKAKPGKRAQERAAEKAQK) has biased composition (basic and acidic residues). Positions 84 to 120 (KREVKSNPEKAKPGKRAQERAAEKAQKAADAAAATAE) are disordered. The segment covering 111–120 (AADAAAATAE) has biased composition (low complexity).

It belongs to the bacterial ribosomal protein bS16 family.

The protein is Small ribosomal subunit protein bS16 of Rhizobium rhizogenes (strain K84 / ATCC BAA-868) (Agrobacterium radiobacter).